Reading from the N-terminus, the 161-residue chain is Monooxygenase AgnL5 (161 aa).

Belongs to the avfA family.

Its pathway is secondary metabolite biosynthesis. Its function is as follows. Monooxygenase; part of the gene cluster that mediates the biosynthesis of agnestins, dihydroxy-xanthone metabolites. The pathway begins with the assembly and cyclization of atrochrysone thioester by the non-reducing polyketide synthase Agnpks1. The atrochrysone carboxyl ACP thioesterase AgnL7 then breaks the thioester bond and releases the atrochrysone carboxylic acid as the first enzyme-free intermediate. The decarboxylase AgnL1 then catalyzes the concerted decarboxylation-elimination required to convert atochrysone carboxylic acid into emodin anthrone, which is further oxidized to emodin by the anthrone oxygenase AgnL2. Emodin then undergoes reduction catalyzed by the oxidoreductase AgnL4 to yield the dihydroquinone tautomer which is the substrate for reduction by the short chain dehydrogenase AgnL6 reduction to produce hydroxyketone, followed by AgnL8 dehydration and likely spontaneous autoxidation to chrysophanol. Baeyer-Villiger oxidation by the oxidase AgnL3 leads to monodictyphenone via cleavage of the C-10/C-10a bond of chrysophanol. Alternative cleavage at the C-4a/C-10 bond of chrysophanol also leads to the formation some cephalone F. Further conversion to agnestins A and B, requires reduction to dihydro-monodictyphenone, oxidation to agnestin C probably via an epoxide, and rearrangement to either agnestin A or agnestin B directly, although agnestin A or agnestin B can also interconvert. Within the cluster, AgnR1 is the only unassigned oxidoreductase present which could be involved in this conversion. However, AgnR1 seems not to be involved in this step, and thus genes involved in the proposed oxidation/reduction may be located elsewhere on the genome. Further agnestin A derivatives are probably formed by spontaneous decarboxylations, dehydrations and methanolysis reactions. This chain is Monooxygenase AgnL5, found in Paecilomyces divaricatus (Penicillium divaricatum).